A 40-amino-acid polypeptide reads, in one-letter code: Natriuretic peptide PpNP-b (40 aa).

Positions 1–8 (SGSKTANI) are excised as a propeptide. Cysteine 12 and cysteine 28 form a disulfide bridge. A disordered region spans residues 20-40 (IGTTSGMGCGRPRPKPTPGGS).

Belongs to the natriuretic peptide family. In terms of tissue distribution, expressed by the venom gland.

It localises to the secreted. Its function is as follows. Snake venom natriuretic peptide that targets both NPR1 and NPR2. Exhibits hypotensive and vasodepressor activities. The polypeptide is Natriuretic peptide PpNP-b (Pseudechis porphyriacus (Red-bellied black snake)).